The primary structure comprises 222 residues: Octanoyltransferase (222 aa).

Residues glycine 35–aspartate 214 enclose the BPL/LPL catalytic domain. Residues arginine 73–histidine 80, alanine 145–glycine 147, and glycine 158–serine 160 contribute to the substrate site. Catalysis depends on cysteine 176, which acts as the Acyl-thioester intermediate.

The protein belongs to the LipB family.

Its subcellular location is the cytoplasm. The enzyme catalyses octanoyl-[ACP] + L-lysyl-[protein] = N(6)-octanoyl-L-lysyl-[protein] + holo-[ACP] + H(+). Its pathway is protein modification; protein lipoylation via endogenous pathway; protein N(6)-(lipoyl)lysine from octanoyl-[acyl-carrier-protein]: step 1/2. Its function is as follows. Catalyzes the transfer of endogenously produced octanoic acid from octanoyl-acyl-carrier-protein onto the lipoyl domains of lipoate-dependent enzymes. Lipoyl-ACP can also act as a substrate although octanoyl-ACP is likely to be the physiological substrate. The sequence is that of Octanoyltransferase from Novosphingobium aromaticivorans (strain ATCC 700278 / DSM 12444 / CCUG 56034 / CIP 105152 / NBRC 16084 / F199).